The following is a 686-amino-acid chain: Translation initiation factor IF-2 (686 aa).

The segment at 54-105 (KPSVADEFEVEEKVVRSKKNSNKKKKKGKGNEDKRQENFAGRQQTQTVETPD) is disordered. Residues 69–81 (RSKKNSNKKKKKG) show a composition bias toward basic residues. A tr-type G domain is found at 188 to 357 (ERPAVVTIMG…LLVSEVEEYK (170 aa)). A G1 region spans residues 197-204 (GHVDHGKT). GTP is bound at residue 197–204 (GHVDHGKT). Residues 222–226 (GITQH) are G2. The tract at residues 243-246 (DTPG) is G3. GTP contacts are provided by residues 243–247 (DTPGH) and 297–300 (NKMD). Residues 297 to 300 (NKMD) form a G4 region. Residues 333–335 (SAI) are G5.

It belongs to the TRAFAC class translation factor GTPase superfamily. Classic translation factor GTPase family. IF-2 subfamily.

The protein resides in the cytoplasm. Its function is as follows. One of the essential components for the initiation of protein synthesis. Protects formylmethionyl-tRNA from spontaneous hydrolysis and promotes its binding to the 30S ribosomal subunits. Also involved in the hydrolysis of GTP during the formation of the 70S ribosomal complex. This chain is Translation initiation factor IF-2, found in Bacillus cereus (strain 03BB102).